The following is a 433-amino-acid chain: 23S rRNA (uracil(1939)-C(5))-methyltransferase RlmD (433 aa).

One can recognise a TRAM domain in the interval Arg10–Arg68. The [4Fe-4S] cluster site is built by Cys81, Cys87, Cys90, and Cys162. Gln265, Phe294, Asn299, Glu315, Asn342, and Asp363 together coordinate S-adenosyl-L-methionine. The Nucleophile role is filled by Cys389.

The protein belongs to the class I-like SAM-binding methyltransferase superfamily. RNA M5U methyltransferase family. RlmD subfamily.

It carries out the reaction uridine(1939) in 23S rRNA + S-adenosyl-L-methionine = 5-methyluridine(1939) in 23S rRNA + S-adenosyl-L-homocysteine + H(+). Its function is as follows. Catalyzes the formation of 5-methyl-uridine at position 1939 (m5U1939) in 23S rRNA. This chain is 23S rRNA (uracil(1939)-C(5))-methyltransferase RlmD, found in Shigella flexneri serotype 5b (strain 8401).